Consider the following 248-residue polypeptide: NADP-dependent 3-hydroxy acid dehydrogenase YdfG (248 aa).

NADP(+) contacts are provided by residues 7-12 (GATAGF), 32-33 (RR), 54-55 (DV), and Asn81. A substrate-binding site is contributed by Ser134. Residues Tyr147, Lys151, and 177–185 (PGLVGGTEF) contribute to the NADP(+) site. Catalysis depends on Tyr147, which acts as the Proton acceptor.

The protein belongs to the short-chain dehydrogenases/reductases (SDR) family. Homotetramer.

It carries out the reaction 3-hydroxypropanoate + NADP(+) = 3-oxopropanoate + NADPH + H(+). The enzyme catalyses L-allo-threonine + NADP(+) = aminoacetone + CO2 + NADPH. Functionally, NADP-dependent dehydrogenase with broad substrate specificity acting on 3-hydroxy acids. Catalyzes the NADP-dependent oxidation of L-allo-threonine to L-2-amino-3-keto-butyrate, which is spontaneously decarboxylated into aminoacetone. Also acts on D-threonine, L-serine, D-serine, D-3-hydroxyisobutyrate, L-3-hydroxyisobutyrate, D-glycerate and L-glycerate. Able to catalyze the reduction of the malonic semialdehyde to 3-hydroxypropionic acid. YdfG is apparently supplementing RutE, the presumed malonic semialdehyde reductase involved in pyrimidine degradation since both are able to detoxify malonic semialdehyde. The sequence is that of NADP-dependent 3-hydroxy acid dehydrogenase YdfG from Escherichia coli O6:H1 (strain CFT073 / ATCC 700928 / UPEC).